A 424-amino-acid chain; its full sequence is Serine hydroxymethyltransferase (424 aa).

Residues Leu126 and 130–132 contribute to the (6S)-5,6,7,8-tetrahydrofolate site; that span reads GHL. The residue at position 235 (Lys235) is an N6-(pyridoxal phosphate)lysine. 359–361 contributes to the (6S)-5,6,7,8-tetrahydrofolate binding site; the sequence is SPF.

It belongs to the SHMT family. In terms of assembly, homodimer. Pyridoxal 5'-phosphate is required as a cofactor.

The protein resides in the cytoplasm. It carries out the reaction (6R)-5,10-methylene-5,6,7,8-tetrahydrofolate + glycine + H2O = (6S)-5,6,7,8-tetrahydrofolate + L-serine. Its pathway is one-carbon metabolism; tetrahydrofolate interconversion. The protein operates within amino-acid biosynthesis; glycine biosynthesis; glycine from L-serine: step 1/1. Its function is as follows. Catalyzes the reversible interconversion of serine and glycine with tetrahydrofolate (THF) serving as the one-carbon carrier. This reaction serves as the major source of one-carbon groups required for the biosynthesis of purines, thymidylate, methionine, and other important biomolecules. Also exhibits THF-independent aldolase activity toward beta-hydroxyamino acids, producing glycine and aldehydes, via a retro-aldol mechanism. This is Serine hydroxymethyltransferase from Prochlorococcus marinus (strain MIT 9303).